The primary structure comprises 579 residues: Adenine/guanine permease AZG1 (579 aa).

12 helical membrane-spanning segments follow: residues 52–72, 131–151, 183–203, 221–241, 260–280, 292–312, 320–340, 379–399, 414–434, 459–479, 480–500, and 514–534; these read AGTA…SILS, LIVA…LMAN, TALA…AIGF, AGIG…IGLV, ISLA…AGGS, MESP…YCLV, IYGI…VTAF, FWEA…GTLY, FAGQ…GSLL, AITV…LASI, PAWA…KSVT, and FVTM…IGGI.

This sequence belongs to the nucleobase:cation symporter-2 (NCS2) (TC 2.A.40) family. Azg-like subfamily.

It is found in the membrane. Its function is as follows. Transports natural purines (adenine and guanine) as well as purine analogs. Confers sensitivity to 8-azaadenine and 8-azaguanine (8-azg). The sequence is that of Adenine/guanine permease AZG1 (AZG1) from Arabidopsis thaliana (Mouse-ear cress).